A 449-amino-acid chain; its full sequence is NADH-quinone oxidoreductase subunit F (449 aa).

67–76 (GRGGAGFPTG) is an NAD(+) binding site. FMN is bound at residue 179–226 (GAGAYICGEETALLDSLEGRRGQPRLRPPFPAVAGLYACPTVVNNVES). 4 residues coordinate [4Fe-4S] cluster: cysteine 355, cysteine 358, cysteine 361, and cysteine 401.

This sequence belongs to the complex I 51 kDa subunit family. FMN is required as a cofactor. It depends on [4Fe-4S] cluster as a cofactor.

The enzyme catalyses a quinone + NADH + 5 H(+)(in) = a quinol + NAD(+) + 4 H(+)(out). In terms of biological role, NDH-1 shuttles electrons from NADH, via FMN and iron-sulfur (Fe-S) centers, to quinones in the respiratory chain. Couples the redox reaction to proton translocation (for every two electrons transferred, four hydrogen ions are translocated across the cytoplasmic membrane), and thus conserves the redox energy in a proton gradient. This Streptomyces coelicolor (strain ATCC BAA-471 / A3(2) / M145) protein is NADH-quinone oxidoreductase subunit F (nuoF).